A 173-amino-acid polypeptide reads, in one-letter code: Mesencephalic astrocyte-derived neurotrophic factor homolog (173 aa).

Residues 1 to 22 form the signal peptide; the sequence is MKTWYMVVVIGFLATLAQTSLA. 4 disulfide bridges follow: Cys-28/Cys-114, Cys-31/Cys-103, Cys-61/Cys-72, and Cys-148/Cys-151.

The protein belongs to the ARMET family.

Its subcellular location is the secreted. Its function is as follows. Required during the maturation of the embryonic nervous system for maintenance of neuronal and cuticular connectivity. Essential for maintenance of dopaminergic neurons and dopamine levels. This is Mesencephalic astrocyte-derived neurotrophic factor homolog from Drosophila erecta (Fruit fly).